A 214-amino-acid chain; its full sequence is MKIFVDTANIEEIKKANELGVICGVTTNPSLIAKEGRDFKEVIKEITSIVDGPISGEVISMECEGMVKEAREIAKIHENMVIKIPMCAEGLKAVNILHKEGIKTNVTLIFSAVQALLAARAGASYVSPFLGRLDDIGSTGMTLIEDISEIFAVHGIETEIISASVRNPIHVLECAKAGSDIATIPYNVIMQMIKHPLTDAGIEKFLKDYEGMNK.

The Schiff-base intermediate with substrate role is filled by Lys-83.

It belongs to the transaldolase family. Type 3B subfamily.

It is found in the cytoplasm. It carries out the reaction D-sedoheptulose 7-phosphate + D-glyceraldehyde 3-phosphate = D-erythrose 4-phosphate + beta-D-fructose 6-phosphate. It participates in carbohydrate degradation; pentose phosphate pathway; D-glyceraldehyde 3-phosphate and beta-D-fructose 6-phosphate from D-ribose 5-phosphate and D-xylulose 5-phosphate (non-oxidative stage): step 2/3. Transaldolase is important for the balance of metabolites in the pentose-phosphate pathway. The protein is Probable transaldolase of Clostridium botulinum (strain Alaska E43 / Type E3).